The primary structure comprises 95 residues: Protein TusB (95 aa).

Belongs to the DsrH/TusB family. Heterohexamer, formed by a dimer of trimers. The hexameric TusBCD complex contains 2 copies each of TusB, TusC and TusD. The TusBCD complex interacts with TusE.

The protein resides in the cytoplasm. Its function is as follows. Part of a sulfur-relay system required for 2-thiolation of 5-methylaminomethyl-2-thiouridine (mnm(5)s(2)U) at tRNA wobble positions. The polypeptide is Protein TusB (Escherichia coli O157:H7).